The sequence spans 231 residues: Large ribosomal subunit protein uL1 (231 aa).

Belongs to the universal ribosomal protein uL1 family. In terms of assembly, part of the 50S ribosomal subunit.

Functionally, binds directly to 23S rRNA. The L1 stalk is quite mobile in the ribosome, and is involved in E site tRNA release. Its function is as follows. Protein L1 is also a translational repressor protein, it controls the translation of the L11 operon by binding to its mRNA. The polypeptide is Large ribosomal subunit protein uL1 (Acinetobacter baumannii (strain AB307-0294)).